A 273-amino-acid chain; its full sequence is Ribosomal RNA small subunit methyltransferase A (273 aa).

S-adenosyl-L-methionine contacts are provided by Asn-18, Leu-20, Gly-45, Glu-66, Asp-91, and Asn-113.

Belongs to the class I-like SAM-binding methyltransferase superfamily. rRNA adenine N(6)-methyltransferase family. RsmA subfamily.

The protein resides in the cytoplasm. It catalyses the reaction adenosine(1518)/adenosine(1519) in 16S rRNA + 4 S-adenosyl-L-methionine = N(6)-dimethyladenosine(1518)/N(6)-dimethyladenosine(1519) in 16S rRNA + 4 S-adenosyl-L-homocysteine + 4 H(+). Functionally, specifically dimethylates two adjacent adenosines (A1518 and A1519) in the loop of a conserved hairpin near the 3'-end of 16S rRNA in the 30S particle. May play a critical role in biogenesis of 30S subunits. In Escherichia coli (strain SE11), this protein is Ribosomal RNA small subunit methyltransferase A.